We begin with the raw amino-acid sequence, 792 residues long: Host cell factor 2 (792 aa).

4 Kelch repeats span residues 34–79, 83–130, 207–255, and 257–303; these read LMII…GFVC, RILV…RLGH, KMYV…VIGN, and MYIF…VSDS. In terms of domain architecture, Fibronectin type-III 1 spans 359–449; the sequence is APSQVQLIKA…QPATKETSMK (91 aa). The segment at 399-447 is disordered; it reads ASSDSSAAPNMQGVRMDPHRQGSNNIVPNSINDTINSTKTEQPATKETS. Polar residues predominate over residues 419 to 445; the sequence is QGSNNIVPNSINDTINSTKTEQPATKE. Lys-553 participates in a covalent cross-link: Glycyl lysine isopeptide (Lys-Gly) (interchain with G-Cter in SUMO2). Fibronectin type-III domains lie at 583–675 and 677–787; these read TPSN…TCIP and FPGA…GNNK.

As to quaternary structure, binds KMT2A/MLL1. Component of the MLL1/MLL complex, at least composed of KMT2A/MLL1, ASH2L, RBBP5, DPY30, WDR5, MEN1, HCFC1 and HCFC2. Interacts with TASOR. As to expression, highly expressed in testis. Detected at lower levels in spleen, thymus, prostate, ovary, small intestine and colon.

The protein resides in the cytoplasm. Its subcellular location is the nucleus. This Homo sapiens (Human) protein is Host cell factor 2 (HCFC2).